An 86-amino-acid chain; its full sequence is Allergen Hum j 3 (86 aa).

This chain is Allergen Hum j 3, found in Humulus japonicus (Japanese hop).